The primary structure comprises 370 residues: Luciferin sulfotransferase (370 aa).

A 3'-phosphoadenylyl sulfate-binding site is contributed by 90-95; it reads KAGTTW. The active-site Proton acceptor is histidine 165. 3'-phosphoadenylyl sulfate-binding positions include arginine 189, serine 197, tyrosine 250, 284 to 289, and 316 to 320; these read LSFESM and FMRSG.

Belongs to the sulfotransferase 1 family.

It catalyses the reaction firefly D-luciferin + 3'-phosphoadenylyl sulfate = firefly D-sulfoluciferin + adenosine 3',5'-bisphosphate + H(+). It carries out the reaction firefly L-luciferin + 3'-phosphoadenylyl sulfate = firefly L-sulfoluciferin + adenosine 3',5'-bisphosphate + H(+). Its activity is regulated as follows. Sulfoluciferin formation is inhibited by the product adenosine 3',5'-bisphosphate. In terms of biological role, catalyzes the production of firefly sulfoluciferin from luciferin using the sulfo-donor 3'-phosphoadenylyl sulfate (PAPS). Is also able to catalyze the reverse reaction, i.e. the adenosine 3',5'-bisphosphate-dependent desulfonation of sulfoluciferin. Can use either D- or L-luciferin stereoisomer as substrate. Sulfoluciferin, which is not a substrate of P.pyralis luciferase, likely serves as a luciferin storage form in fireflies. This chain is Luciferin sulfotransferase, found in Photinus pyralis (Common eastern firefly).